The primary structure comprises 381 residues: Dual specificity protein phosphatase 6 (381 aa).

The Rhodanese domain occupies 30-148 (GNERLLLMDC…FQAEFALHCE (119 aa)). The disordered stretch occupies residues 176–203 (SSSDIESDLDRDPNSATDSDGSPLSNSQ). Polar residues predominate over residues 189–203 (NSATDSDGSPLSNSQ). The Tyrosine-protein phosphatase domain maps to 206–349 (FPVEILPFLY…LLDFERTLGL (144 aa)). C293 (phosphocysteine intermediate) is an active-site residue.

It belongs to the protein-tyrosine phosphatase family. Non-receptor class dual specificity subfamily. In terms of assembly, interacts with MAPK1/ERK2. Ubiquitinated by the SCF(FBXO31) complex, leading to its proteasomal degradation.

It is found in the cytoplasm. The enzyme catalyses O-phospho-L-tyrosyl-[protein] + H2O = L-tyrosyl-[protein] + phosphate. It carries out the reaction O-phospho-L-seryl-[protein] + H2O = L-seryl-[protein] + phosphate. The catalysed reaction is O-phospho-L-threonyl-[protein] + H2O = L-threonyl-[protein] + phosphate. Functionally, dual specificity protein phosphatase, which mediates dephosphorylation and inactivation of MAP kinases. Has a specificity for the ERK family. Plays an important role in alleviating acute postoperative pain. Necessary for the normal dephosphorylation of the long-lasting phosphorylated forms of spinal MAPK1/3 and MAP kinase p38 induced by peripheral surgery, which drives the resolution of acute postoperative allodynia. Also important for dephosphorylation of MAPK1/3 in local wound tissue, which further contributes to resolution of acute pain. The chain is Dual specificity protein phosphatase 6 (Dusp6) from Mus musculus (Mouse).